The following is a 274-amino-acid chain: MYRLAAFDMDGTLLTPDHRVGPETLAVLKQLVEREMVVTFATGRHYLDAQPIMAQLGLQGYLITGNGTRVYDDRGQQLQATDLPADIAEEVLHTHWHTDASMHVFRDEGWMTEFAVPEEMLRAHHLSGFHYQLTELRRLPAFGNSKVCFAGPHEELLKLQVQLRRHFAARVDLCFSAYECLEVLPLGCNKGSALDMLSRHLGLKMAECMAFGDAMNDKEMLATVGHGVVMGNALPQLKSLLPQLQVIGHCEQQAVAHYLQHWLRSPYLTYSPEL.

The active-site Nucleophile is the Asp8. Mg(2+) contacts are provided by Asp8, Asp10, and Asp213.

Belongs to the HAD-like hydrolase superfamily. Cof family. Requires Mg(2+) as cofactor.

It catalyses the reaction 4-amino-2-methyl-5-(diphosphooxymethyl)pyrimidine + H2O = 4-amino-2-methyl-5-(phosphooxymethyl)pyrimidine + phosphate + H(+). Catalyzes the hydrolysis of 4-amino-2-methyl-5-hydroxymethylpyrimidine pyrophosphate (HMP-PP) to 4-amino-2-methyl-5-hydroxymethylpyrimidine phosphate (HMP-P). This is HMP-PP phosphatase from Serratia proteamaculans (strain 568).